The chain runs to 70 residues: Conotoxin TsMLKM-011 (70 aa).

A signal peptide spans 1-24; sequence MLKMGVVLFVFLVLFPLATLQLDA. The propeptide occupies 25–54; it reads DQPVERYAENKQLVSPYERRQIILHALGQR. Intrachain disulfides connect Cys56-Cys66, Cys57-Cys68, and Cys62-Cys69.

Belongs to the conotoxin M superfamily. As to expression, expressed by the venom duct.

It is found in the secreted. The protein is Conotoxin TsMLKM-011 of Conus tessulatus (Tessellate cone).